The sequence spans 353 residues: Endophilin-A1 (353 aa).

Positions 1–21 (MSVAGLKKQFHKATQKVSEKV) are membrane-binding amphipathic helix. Residues 1-27 (MSVAGLKKQFHKATQKVSEKVGGAEGT) form a disordered region. A binds and tubulates liposomes region spans residues 1–125 (MSVAGLKKQF…DVGEAMKELS (125 aa)). The BAR domain occupies 18–249 (SEKVGGAEGT…LEDRIKEASS (232 aa)). A required for dimerization upon membrane association region spans residues 60–87 (PNPASRAKLSMINTMSKIRGQEKGPGYP). Residues 181 to 201 (EELRQALEKFDESKEIAESSM) are a coiled coil. Basic and acidic residues predominate over residues 243–257 (RIKEASSQPKREYQP). The interval 243-290 (RIKEASSQPKREYQPKPRMSLDFTSGGDNTQHNGGISHATTPKPAGAH) is disordered. Polar residues predominate over residues 264-282 (DFTSGGDNTQHNGGISHAT). An SH3 domain is found at 291–350 (MDQPCCRALYDFEPENEGELGFKEGDIITLTNQIDENWYEGMLHGQSGFFPINYVDILVP).

It belongs to the endophilin family. Monomer; in cytoplasm. Homodimer; when associated with membranes. Associates with MAP4K3. This interaction appears to regulate MAP4K3-mediated JNK activation. Interacts with SYNJ1 and DNM1. In terms of tissue distribution, highly expressed in brain.

Its subcellular location is the cytoplasm. It is found in the membrane. The protein localises to the early endosome. The protein resides in the presynapse. Its function is as follows. Implicated in synaptic vesicle endocytosis. May recruit other proteins to membranes with high curvature. In Gallus gallus (Chicken), this protein is Endophilin-A1.